Here is a 375-residue protein sequence, read N- to C-terminus: tRNA-specific 2-thiouridylase MnmA (375 aa).

Residues 12–19 and Met38 contribute to the ATP site; that span reads GMSGGVDS. Positions 98-100 are interaction with target base in tRNA; the sequence is NPD. The active-site Nucleophile is the Cys103. An intrachain disulfide couples Cys103 to Cys200. Gly127 is a binding site for ATP. The interval 150 to 152 is interaction with tRNA; that stretch reads KDQ. Residue Cys200 is the Cysteine persulfide intermediate of the active site. The tract at residues 312-313 is interaction with tRNA; sequence RY.

It belongs to the MnmA/TRMU family.

It is found in the cytoplasm. It catalyses the reaction S-sulfanyl-L-cysteinyl-[protein] + uridine(34) in tRNA + AH2 + ATP = 2-thiouridine(34) in tRNA + L-cysteinyl-[protein] + A + AMP + diphosphate + H(+). Functionally, catalyzes the 2-thiolation of uridine at the wobble position (U34) of tRNA, leading to the formation of s(2)U34. In Lactobacillus helveticus (strain DPC 4571), this protein is tRNA-specific 2-thiouridylase MnmA.